The primary structure comprises 112 residues: Putative pterin-4-alpha-carbinolamine dehydratase (112 aa).

The protein belongs to the pterin-4-alpha-carbinolamine dehydratase family.

The enzyme catalyses (4aS,6R)-4a-hydroxy-L-erythro-5,6,7,8-tetrahydrobiopterin = (6R)-L-erythro-6,7-dihydrobiopterin + H2O. The chain is Putative pterin-4-alpha-carbinolamine dehydratase from Shewanella sp. (strain ANA-3).